Reading from the N-terminus, the 124-residue chain is Secretion system apparatus protein SsaP (124 aa).

This is Secretion system apparatus protein SsaP (ssaP) from Salmonella typhi.